The following is a 239-amino-acid chain: Adapter protein MecA (239 aa).

The span at 118–128 (EQRTKEKEAQG) shows a compositional bias: basic and acidic residues. The interval 118–137 (EQRTKEKEAQGSKRQKSSAR) is disordered.

The protein belongs to the MecA family. Homodimer.

Functionally, enables the recognition and targeting of unfolded and aggregated proteins to the ClpC protease or to other proteins involved in proteolysis. The sequence is that of Adapter protein MecA from Staphylococcus aureus (strain COL).